The primary structure comprises 227 residues: Uracil phosphoribosyltransferase (227 aa).

GTP is bound at residue lysine 36 to lysine 40. 5-phospho-alpha-D-ribose 1-diphosphate is bound by residues arginine 86, arginine 111, and aspartate 145–threonine 153. Uracil-binding positions include isoleucine 212 and glycine 217–alanine 219. Aspartate 218 is a binding site for 5-phospho-alpha-D-ribose 1-diphosphate.

The protein belongs to the UPRTase family. Requires Mg(2+) as cofactor.

The catalysed reaction is UMP + diphosphate = 5-phospho-alpha-D-ribose 1-diphosphate + uracil. It functions in the pathway pyrimidine metabolism; UMP biosynthesis via salvage pathway; UMP from uracil: step 1/1. Allosterically activated by GTP. In terms of biological role, catalyzes the conversion of uracil and 5-phospho-alpha-D-ribose 1-diphosphate (PRPP) to UMP and diphosphate. This Halobacterium salinarum (strain ATCC 700922 / JCM 11081 / NRC-1) (Halobacterium halobium) protein is Uracil phosphoribosyltransferase.